We begin with the raw amino-acid sequence, 1764 residues long: Latent-transforming growth factor beta-binding protein 2 (1764 aa).

The signal sequence occupies residues Met1–Ala35. The segment at Pro80–Val140 is disordered. A heparin-binding region spans residues Ile94–Val115. Residues Arg108–Gly128 are compositionally biased toward polar residues. The N-linked (GlcNAc...) asparagine glycan is linked to Asn175. Positions Ile181 to Glu213 constitute an EGF-like 1 domain. 3 disulfides stabilise this stretch: Cys185-Cys195, Cys189-Cys201, and Cys203-Cys212. The disordered stretch occupies residues Glu220–Ala279. Residues Ala226–Ser243 are heparin-binding. A compositionally biased stretch (pro residues) spans Leu257 to Ser266. Asn330 carries N-linked (GlcNAc...) asparagine glycosylation. Residue Leu331 to Val341 coordinates heparin. Residues Arg383–His415 enclose the EGF-like 2 domain. 3 cysteine pairs are disulfide-bonded: Cys387–Cys397, Cys391–Cys403, and Cys405–Cys414. N-linked (GlcNAc...) asparagine glycosylation is present at Asn408. The tract at residues Glu484–Val529 is disordered. Ser493 carries the post-translational modification Phosphoserine. The region spanning Gly538–Gly590 is the TB 1 domain. Disulfide bonds link Cys540–Cys562, Cys549–Cys575, and Cys563–Cys578. Asn602 carries N-linked (GlcNAc...) asparagine glycosylation. Positions Asp608–Val648 constitute an EGF-like 3; calcium-binding domain. 7 cysteine pairs are disulfide-bonded: Cys612–Cys623, Cys618–Cys632, Cys634–Cys647, Cys660–Cys682, Cys669–Cys695, Cys683–Cys698, and Cys684–Cys710. One can recognise a TB 2 domain in the interval Gly658–Cys710. Disordered stretches follow at residues Lys729 to Leu759 and Ser786 to Gln809. The 43-residue stretch at Gly834–Thr876 folds into the EGF-like 4 domain. 45 disulfide bridges follow: Cys838–Cys851, Cys846–Cys860, Cys862–Cys875, Cys881–Cys892, Cys886–Cys901, Cys903–Cys918, Cys924–Cys935, Cys930–Cys944, Cys946–Cys958, Cys964–Cys975, Cys970–Cys984, Cys987–Cys998, Cys1004–Cys1015, Cys1010–Cys1024, Cys1026–Cys1039, Cys1045–Cys1056, Cys1051–Cys1065, Cys1068–Cys1081, Cys1087–Cys1098, Cys1093–Cys1107, Cys1110–Cys1123, Cys1129–Cys1141, Cys1136–Cys1150, Cys1152–Cys1164, Cys1170–Cys1182, Cys1176–Cys1191, Cys1193–Cys1206, Cys1212–Cys1223, Cys1218–Cys1232, Cys1234–Cys1247, Cys1253–Cys1265, Cys1259–Cys1274, Cys1276–Cys1289, Cys1295–Cys1307, Cys1302–Cys1316, Cys1318–Cys1332, Cys1359–Cys1382, Cys1369–Cys1394, Cys1383–Cys1397, Cys1435–Cys1448, Cys1443–Cys1457, Cys1459–Cys1472, Cys1478–Cys1488, Cys1483–Cys1497, and Cys1499–Cys1512. The EGF-like 5; calcium-binding domain occupies Asp877–Gln919. An EGF-like 6; calcium-binding domain is found at Asp920–Gln959. One can recognise an EGF-like 7; calcium-binding domain in the interval Asp960–Val999. In terms of domain architecture, EGF-like 8; calcium-binding spans Asp1000–Arg1040. Positions Asp1041 to Glu1082 constitute an EGF-like 9; calcium-binding domain. Positions Asp1083–Glu1124 constitute an EGF-like 10; calcium-binding domain. One can recognise an EGF-like 11; calcium-binding domain in the interval Asp1125–Glu1165. Residue Asn1160 is glycosylated (N-linked (GlcNAc...) asparagine). In terms of domain architecture, EGF-like 12; calcium-binding spans Asp1166–Gln1207. One can recognise an EGF-like 13; calcium-binding domain in the interval Asp1208–Val1248. In terms of domain architecture, EGF-like 15; calcium-binding spans Asp1249–Val1290. Residue Asn1255 is glycosylated (N-linked (GlcNAc...) asparagine). The region spanning Asp1291 to Arg1333 is the EGF-like 16; calcium-binding domain. Positions Met1357–Cys1409 constitute a TB 3 domain. Asn1376 carries an N-linked (GlcNAc...) asparagine glycan. One can recognise an EGF-like 17; calcium-binding domain in the interval Asp1431–Gln1473. Residues Asp1474–Val1513 enclose the EGF-like 18; calcium-binding domain. N-linked (GlcNAc...) asparagine glycosylation is present at Asn1514. Residues Asp1530 to Cys1582 enclose the TB 4 domain. 10 disulfides stabilise this stretch: Cys1532-Cys1555, Cys1541-Cys1567, Cys1556-Cys1570, Cys1557-Cys1582, Cys1680-Cys1691, Cys1686-Cys1700, Cys1702-Cys1715, Cys1721-Cys1736, Cys1731-Cys1745, and Cys1747-Cys1760. Positions Ala1585–Glu1764 are C-terminal domain. In terms of domain architecture, EGF-like 19; calcium-binding spans Gln1676–Val1716. An EGF-like 20; calcium-binding domain is found at Asp1717–Ala1761.

It belongs to the LTBP family. In terms of assembly, forms part of the large latent transforming growth factor beta precursor complex; removal is essential for activation of complex. Interacts with SDC4. Interacts (via C-terminal domain) with FBN1 (via N-terminal domain) in a Ca(+2)-dependent manner. Post-translationally, N-Glycosylated. In terms of processing, contains hydroxylated asparagine residues. As to expression, expressed in cortical astrocytes and glioma cells. Expression is up-regulated by TGFB1.

It is found in the secreted. It localises to the extracellular space. The protein localises to the extracellular matrix. Functionally, may play an integral structural role in elastic-fiber architectural organization and/or assembly. The polypeptide is Latent-transforming growth factor beta-binding protein 2 (Ltbp2) (Rattus norvegicus (Rat)).